A 171-amino-acid chain; its full sequence is uncharacterized protein (171 aa).

Disordered stretches follow at residues 27–53 and 82–108; these read DCPG…KMVL and GHLE…PSSS. Residues 32 to 50 show a composition bias toward polar residues; the sequence is GNNNREPSISTRGRTSSSK.

This is an uncharacterized protein from Homo sapiens (Human).